Reading from the N-terminus, the 796-residue chain is Serine/threonine-protein kinase ATG1 (796 aa).

Residues 9–304 form the Protein kinase domain; sequence YVVGAEIGRG…FQEFFNDPVI (296 aa). Residues 15–23 and lysine 38 each bind ATP; that span reads IGRGSFANV. Aspartate 155 functions as the Proton acceptor in the catalytic mechanism. The segment covering 360–370 has biased composition (acidic residues); sequence LEEEDEEEDQD. Disordered stretches follow at residues 360–382, 389–408, and 450–480; these read LEEE…IQHM, LLNK…RREL, and PYTR…KVPI. Residues 389-403 are compositionally biased toward polar residues; sequence LLNKTTQKQTEVQSQ. Low complexity predominate over residues 453 to 470; that stretch reads RRYSSSSRSSSTGSNQRR.

Belongs to the protein kinase superfamily. Ser/Thr protein kinase family. APG1/unc-51/ULK1 subfamily. In terms of assembly, homodimer. Forms a ternary complex with ATG13 and ATG17.

The protein resides in the cytoplasm. It localises to the preautophagosomal structure membrane. It catalyses the reaction L-seryl-[protein] + ATP = O-phospho-L-seryl-[protein] + ADP + H(+). It carries out the reaction L-threonyl-[protein] + ATP = O-phospho-L-threonyl-[protein] + ADP + H(+). Its function is as follows. Serine/threonine protein kinase involved in the cytoplasm to vacuole transport (Cvt) and found to be essential in autophagy, where it is required for the formation of autophagosomes. Involved in the clearance of protein aggregates which cannot be efficiently cleared by the proteasome. Required for selective autophagic degradation of the nucleus (nucleophagy) as well as for mitophagy which contributes to regulate mitochondrial quantity and quality by eliminating the mitochondria to a basal level to fulfill cellular energy requirements and preventing excess ROS production. Also involved in endoplasmic reticulum-specific autophagic process, in selective removal of ER-associated degradation (ERAD) substrates. Plays a key role in ATG9 and ATG23 cycling through the pre-autophagosomal structure and is necessary to promote ATG18 binding to ATG9 through phosphorylation of ATG9. Catalyzes phosphorylation of ATG4, decreasing the interaction between ATG4 and ATG8 and impairing deconjugation of PE-conjugated forms of ATG8. This is Serine/threonine-protein kinase ATG1 from Komagataella pastoris (Yeast).